The chain runs to 186 residues: Protein Syd (186 aa).

It belongs to the Syd family.

The protein localises to the cell inner membrane. Interacts with the SecY protein in vivo. May bind preferentially to an uncomplexed state of SecY, thus functioning either as a chelating agent for excess SecY in the cell or as a regulatory factor that negatively controls the translocase function. The polypeptide is Protein Syd (Pseudoalteromonas atlantica (strain T6c / ATCC BAA-1087)).